The chain runs to 472 residues: Eukaryotic translation initiation factor 2 subunit 3 (472 aa).

Ala2 carries the post-translational modification N-acetylalanine; partial. The tr-type G domain occupies 39–247 (QATINIGTIG…YIVKKIPVPL (209 aa)). A G1 region spans residues 48-55 (GHVAHGKS). Residue 51 to 56 (AHGKST) participates in GTP binding. Positions 76–80 (NITIK) are G2. The G3 stretch occupies residues 134-137 (DCPG). Residues 190 to 193 (NKID) and 225 to 227 (SAQ) contribute to the GTP site. The tract at residues 190–193 (NKID) is G4. Positions 225 to 227 (SAQ) are G5. Positions 457–469 (GQIRRGVTIKPTV) are interacts with CDC123.

This sequence belongs to the TRAFAC class translation factor GTPase superfamily. Classic translation factor GTPase family. EIF2G subfamily. As to quaternary structure, eukaryotic translation initiation factor 2 eIF2 is a heterotrimeric complex composed of an alpha (EIF2S1), a beta (EIF2S2) and a gamma (EIF2S3) chain. eIF2 is member of the 43S pre-initiation complex (43S PIC).

Its subcellular location is the cytoplasm. The protein localises to the cytosol. It catalyses the reaction GTP + H2O = GDP + phosphate + H(+). Member of the eIF2 complex that functions in the early steps of protein synthesis by forming a ternary complex with GTP and initiator tRNA. This complex binds to a 40S ribosomal subunit, followed by mRNA binding to form the 43S pre-initiation complex (43S PIC). Junction of the 60S ribosomal subunit to form the 80S initiation complex is preceded by hydrolysis of the GTP bound to eIF2 and release of an eIF2-GDP binary complex. In order for eIF2 to recycle and catalyze another round of initiation, the GDP bound to eIF2 must exchange with GTP by way of a reaction catalyzed by eIF-2B. In Gallus gallus (Chicken), this protein is Eukaryotic translation initiation factor 2 subunit 3 (EIF2S3).